Reading from the N-terminus, the 461-residue chain is O-methyltransferase CTB2 (461 aa).

Residue Asp288 participates in S-adenosyl-L-methionine binding. His339 functions as the Proton acceptor in the catalytic mechanism.

This sequence belongs to the class I-like SAM-binding methyltransferase superfamily. Cation-independent O-methyltransferase family. COMT subfamily.

The protein operates within mycotoxin biosynthesis. O-methyltransferase; part of the gene cluster that mediates the biosynthesis of cercosporin, a light-activated, non-host-selective toxin. The perylenequinone chromophore of cercosporin absorbs light energy to attain an electronically-activated triplet state and produces active oxygen species such as the hydroxyl radical, superoxide, hydrogen peroxide or singlet oxygen upon reaction with oxygen molecules. These reactive oxygen species cause damage to various cellular components including lipids, proteins and nucleic acids. The first step of cercosporin biosynthesis is performed by the polyketide synthase CTB1 which catalyzes the formation of nor-toralactone. The starter unit acyltransferase (SAT) domain of CTB1 initiates polyketide extension by the selective utilization of acetyl-CoA, which is elongated to the heptaketide in the beta-ketoacyl synthase (KS) domain by successive condensations with six malonyl units introduced by the malonyl acyltransferase (MAT) domain. The product template (PT) domain catalyzes C4-C9 and C2-C11 aldol cyclizations and dehydrations to a trihydroxynaphthalene, which is thought to be delivered to the thioesterase (TE) domain for product release. The bifunctional enzyme CTB3 then methylates nor-toralactone to toralactone before conducting an unusual oxidative aromatic ring opening. The O-methyltransferase CTB2 further methylates the nascent OH-6 of the CBT3 product, blocking further oxidation at this site before the reductase CTB6 reduces the 2-oxopropyl ketone at position C7, giving naphthalene. The FAD-dependent monooxygenase CTB5 in concert with the multicopper oxidase CTB12 are responsible for homodimerization of naphthalene with CTB7 installing the dioxepine moiety, finally producing cercosporin. The fasciclin domain-containing protein CTB11 might act with CTB5 and CTB12 whereas the roles of CTB9 and CTB10 have still to be elucidated. The chain is O-methyltransferase CTB2 from Cercospora nicotianae (Barn spot disease fungus).